Here is a 230-residue protein sequence, read N- to C-terminus: Ribonuclease 3 (230 aa).

The RNase III domain maps to 5–134 (EALLKSSFAI…FLGALLLDKG (130 aa)). Residue Glu-47 coordinates Mg(2+). Residue Asp-51 is part of the active site. Mg(2+)-binding residues include Asp-120 and Glu-123. The active site involves Glu-123. The 70-residue stretch at 160–229 (DYKTSLQEIL…AENALKALSE (70 aa)) folds into the DRBM domain.

It belongs to the ribonuclease III family. Homodimer. The cofactor is Mg(2+).

It localises to the cytoplasm. It catalyses the reaction Endonucleolytic cleavage to 5'-phosphomonoester.. Its function is as follows. Digests double-stranded RNA. Involved in the processing of primary rRNA transcript to yield the immediate precursors to the large and small rRNAs (23S and 16S). Processes some mRNAs, and tRNAs when they are encoded in the rRNA operon. Processes pre-crRNA and tracrRNA of type II CRISPR loci if present in the organism. The chain is Ribonuclease 3 from Streptococcus uberis (strain ATCC BAA-854 / 0140J).